Here is a 189-residue protein sequence, read N- to C-terminus: UPF0301 protein bbp_491 (189 aa).

Belongs to the UPF0301 (AlgH) family.

The protein is UPF0301 protein bbp_491 of Buchnera aphidicola subsp. Baizongia pistaciae (strain Bp).